We begin with the raw amino-acid sequence, 447 residues long: Tubulin beta-5 chain (447 aa).

GTP-binding residues include Gln-11, Glu-69, Ser-138, Gly-142, Thr-143, Gly-144, Asn-204, and Asn-226. A Mg(2+)-binding site is contributed by Glu-69.

Belongs to the tubulin family. As to quaternary structure, dimer of alpha and beta chains. A typical microtubule is a hollow water-filled tube with an outer diameter of 25 nm and an inner diameter of 15 nM. Alpha-beta heterodimers associate head-to-tail to form protofilaments running lengthwise along the microtubule wall with the beta-tubulin subunit facing the microtubule plus end conferring a structural polarity. Microtubules usually have 13 protofilaments but different protofilament numbers can be found in some organisms and specialized cells. Requires Mg(2+) as cofactor.

Its subcellular location is the cytoplasm. It is found in the cytoskeleton. In terms of biological role, tubulin is the major constituent of microtubules, a cylinder consisting of laterally associated linear protofilaments composed of alpha- and beta-tubulin heterodimers. Microtubules grow by the addition of GTP-tubulin dimers to the microtubule end, where a stabilizing cap forms. Below the cap, tubulin dimers are in GDP-bound state, owing to GTPase activity of alpha-tubulin. The chain is Tubulin beta-5 chain (TUBB5) from Triticum aestivum (Wheat).